The sequence spans 223 residues: Urease accessory protein UreF (223 aa).

This sequence belongs to the UreF family. UreD, UreF and UreG form a complex that acts as a GTP-hydrolysis-dependent molecular chaperone, activating the urease apoprotein by helping to assemble the nickel containing metallocenter of UreC. The UreE protein probably delivers the nickel.

The protein localises to the cytoplasm. Its function is as follows. Required for maturation of urease via the functional incorporation of the urease nickel metallocenter. This Rhizobium etli (strain CIAT 652) protein is Urease accessory protein UreF.